The sequence spans 625 residues: tRNA uridine 5-carboxymethylaminomethyl modification enzyme MnmG (625 aa).

14-19 (GAGHAG) serves as a coordination point for FAD. Residue 273–287 (GPRYCPSIEDKIVRF) coordinates NAD(+).

Belongs to the MnmG family. As to quaternary structure, homodimer. Heterotetramer of two MnmE and two MnmG subunits. Requires FAD as cofactor.

The protein localises to the cytoplasm. In terms of biological role, NAD-binding protein involved in the addition of a carboxymethylaminomethyl (cmnm) group at the wobble position (U34) of certain tRNAs, forming tRNA-cmnm(5)s(2)U34. This is tRNA uridine 5-carboxymethylaminomethyl modification enzyme MnmG from Clostridium botulinum (strain Hall / ATCC 3502 / NCTC 13319 / Type A).